The chain runs to 1926 residues: Rho GTPase-activating protein 21-A (1926 aa).

Residues 1–41 (MATRRAIVPEQQQEPSSPASEISKNKDGQEQSEMVSPMEEE) form a disordered region. Polar residues predominate over residues 10 to 22 (EQQQEPSSPASEI). Residues 77–162 (HTSIKDEENG…TLELSVMPKD (86 aa)) form the PDZ domain. 6 disordered regions span residues 211–236 (VEVPPSGTSLAKQQSSRPVRTATTQP), 353–378 (PTAQAEGSPSPTNHYSSPGPHQQIDW), 416–487 (TDYN…RSES), 571–592 (QPTRQNSYRSPHPRPAVSDRSG), 640–704 (FQRK…DSDA), and 868–905 (GKLGLKQGSSLKGVQARENVPSSEDSESRKDSSSDVFS). Polar residues-rich tracts occupy residues 216 to 236 (SGTSLAKQQSSRPVRTATTQP), 353 to 372 (PTAQAEGSPSPTNHYSSPGP), and 416 to 429 (TDYNQMLPNHFSGQ). Residues 441-451 (QQSVQMRQRSV) are compositionally biased toward low complexity. Residues 452–466 (SQERLEDPVLMKEWP) are compositionally biased toward basic and acidic residues. A compositionally biased stretch (polar residues) spans 468-479 (SASQDTLSSAVA). Polar residues predominate over residues 640-669 (FQRKTQTESASGFQLDSVKTSMSASSSPPA). A PH domain is found at 906 to 1019 (DSNKEGFLYF…WIKAIQENGN (114 aa)). The segment covering 1044 to 1064 (MSSASNKSEQSPKAPRQTLSI) has biased composition (polar residues). A disordered region spans residues 1044–1107 (MSSASNKSEQ…SPPKDKGSWR (64 aa)). The segment covering 1083–1105 (PKQESERRLFSKDDISPPKDKGS) has biased composition (basic and acidic residues). The region spanning 1126 to 1318 (VRLDDCPPAH…TLIQKHDWFF (193 aa)) is the Rho-GAP domain. Disordered regions lie at residues 1330-1381 (VHEE…SGKD), 1396-1416 (ASRKRKKPKDKPQPSSSEDEL), 1512-1540 (QMEESMSDSGTMLSNSSQASAQRSKPKVV), 1573-1598 (LDPNPISPEVQSVAESKGEEADDERS), 1626-1658 (RQHRSKEEDPPRNVQANAEGSPSCTEGSITPRL), and 1827-1915 (STSE…LSGT). The segment covering 1512–1534 (QMEESMSDSGTMLSNSSQASAQR) has biased composition (polar residues). Composition is skewed to polar residues over residues 1639–1653 (VQANAEGSPSCTEGS) and 1866–1902 (TADIPTGSESPSLGTAPQSDDQMNGDSFQSKNKNNFS).

Its subcellular location is the golgi apparatus membrane. It localises to the cell junction. It is found in the cytoplasmic vesicle membrane. The protein localises to the cytoplasm. The protein resides in the cytoskeleton. In terms of biological role, GTPase-activating protein (GAP) for rhoa and cdc42. The polypeptide is Rho GTPase-activating protein 21-A (arhgap21-a) (Xenopus laevis (African clawed frog)).